The chain runs to 90 residues: Phaiodotoxin (90 aa).

An N-terminal signal peptide occupies residues 1–18 (MKTIPLLFLLFIYFECDG). The 72-residue stretch at 19–90 (KFIRHKDESF…CFGALESKCA (72 aa)) folds into the LCN-type CS-alpha/beta domain. Disulfide bonds link Cys-31/Cys-56, Cys-41/Cys-68, Cys-45/Cys-70, and Cys-81/Cys-89.

Expressed by the venom gland.

The protein resides in the secreted. Sodium channel (Nav) specific neurotoxin. Causes impairment of movement and mild paralysis in crickets at a dose of 0.5 ug per animal. A dose of 0.8 ug per cricket causes clear flaccid paralysis. A dose of 1.0 ug per cricket causes death within 2 hours. Is not toxic to mice at a dose of 100 ug per 20 g mouse weight. In Anuroctonus phaiodactylus (Mafia scorpion), this protein is Phaiodotoxin.